The primary structure comprises 485 residues: Glutamate--tRNA ligase (485 aa).

The 'HIGH' region signature appears at 12 to 22 (PSPTGEPHVGT). Residues 253 to 257 (KLSKR) carry the 'KMSKS' region motif. An ATP-binding site is contributed by Lys-256.

This sequence belongs to the class-I aminoacyl-tRNA synthetase family. Glutamate--tRNA ligase type 1 subfamily. As to quaternary structure, monomer.

It is found in the cytoplasm. The catalysed reaction is tRNA(Glu) + L-glutamate + ATP = L-glutamyl-tRNA(Glu) + AMP + diphosphate. Functionally, catalyzes the attachment of glutamate to tRNA(Glu) in a two-step reaction: glutamate is first activated by ATP to form Glu-AMP and then transferred to the acceptor end of tRNA(Glu). The sequence is that of Glutamate--tRNA ligase from Sinorhizobium medicae (strain WSM419) (Ensifer medicae).